The chain runs to 703 residues: Polyribonucleotide nucleotidyltransferase (703 aa).

The Mg(2+) site is built by aspartate 485 and aspartate 491. In terms of domain architecture, KH spans proline 552–isoleucine 611. Residues glycine 621–lysine 689 enclose the S1 motif domain.

Belongs to the polyribonucleotide nucleotidyltransferase family. In terms of assembly, component of the RNA degradosome, which is a multiprotein complex involved in RNA processing and mRNA degradation. Mg(2+) is required as a cofactor.

It localises to the cytoplasm. It catalyses the reaction RNA(n+1) + phosphate = RNA(n) + a ribonucleoside 5'-diphosphate. Involved in mRNA degradation. Catalyzes the phosphorolysis of single-stranded polyribonucleotides processively in the 3'- to 5'-direction. The sequence is that of Polyribonucleotide nucleotidyltransferase from Pseudoalteromonas atlantica (strain T6c / ATCC BAA-1087).